A 487-amino-acid chain; its full sequence is Probable nuclear hormone receptor HR3 (487 aa).

Positions 48–123 (IIPCKVCGDK…LGMSRDAVKF (76 aa)) form a DNA-binding region, nuclear receptor. 2 consecutive NR C4-type zinc fingers follow at residues 51–71 (CKVC…CEGC) and 87–111 (CPRN…LQKC). The disordered stretch occupies residues 145–176 (MRAQSDAAPDSSVYDTQTPSSSDQLHHNNYNS). Residues 157 to 167 (VYDTQTPSSSD) show a composition bias toward polar residues. One can recognise an NR LBD domain in the interval 237 to 480 (INDVLIKTLA…PALYKELFSI (244 aa)).

It belongs to the nuclear hormone receptor family. NR1 subfamily.

It localises to the nucleus. Its function is as follows. Putative receptor whose ligand is not yet known. In Drosophila melanogaster (Fruit fly), this protein is Probable nuclear hormone receptor HR3.